The following is a 172-amino-acid chain: Light-harvesting complex-like protein OHP2, chloroplastic (172 aa).

The transit peptide at 1–43 directs the protein to the chloroplast; sequence MSVASPIQCIRILNPSSSSSSSTASSSFRFSTTTKPCVFIIRC. Over 44–135 the chain is Stromal; it reads SQTEGPLRRP…QPKNEISNGR (92 aa). The tract at residues 45-90 is disordered; sequence QTEGPLRRPSAPPTLREPQKPVPPSQPSSSPPPSPPPQKAVAVDGK. Over residues 64-82 the composition is skewed to pro residues; sequence KPVPPSQPSSSPPPSPPPQ. Residues 136–156 form a helical membrane-spanning segment; the sequence is WAMFGFAVGMLTEYATGSDLV. Residues 157-172 are Lumenal-facing; that stretch reads DQVKILLSNFGILDLE.

It belongs to the ELIP/psbS family. As to quaternary structure, component of a high molecular weight complex containing OHP1, OHP2 and HCF244, and PSII core proteins D1/D2, HCF136 and HCF173. Forms a trimeric complex with OHP1 and HCF244 that mutually stabilizes each subunit.

It is found in the plastid. It localises to the chloroplast thylakoid membrane. May play a photoprotective role within PSI in response to light stress. Forms a trimeric complex with OHP1 and HCF244 that is required to promote PSII core subunit assembly. The trimeric complex forms a transient PSII reaction center-like complex with PsbA, PsbD, PsbE, PsbF and PsbI subunits in thylakoids for early assembly of PSII as well as PSII repair. The trimeric complex is required for the recruitment of ribosomes to the psbA mRNA during PSII biogenesis and repair. Forms a heterodimer with OHP1 that binds chlorophylls and carotenoids, and that may function in the delivery of pigments to the PsbA subunit of PSII. The polypeptide is Light-harvesting complex-like protein OHP2, chloroplastic (Arabidopsis thaliana (Mouse-ear cress)).